The primary structure comprises 642 residues: Tigger transposable element derived 5 (642 aa).

Residues 1–54 (MYPASPPAGPALHPVPHRARLPQPRCLAEPPRSPAPGPGSTARPPPPPAPGPRP) are disordered. Residues 31 to 53 (PRSPAPGPGSTARPPPPPAPGPR) show a composition bias toward pro residues. One can recognise an HTH psq-type domain in the interval 57-108 (AVKMTFRKAYSIKDKLQAIERVKGGERQASVCRDFGVPGGTLRGWLKDEPKL). 2 consecutive DNA-binding regions (H-T-H motif) follow at residues 84–104 (QASVCRDFGVPGGTLRGWLKD) and 155–188 (PVIQAQAEAFARQIYGPECTFKASHGWFWRWQKR). The HTH CENPB-type domain maps to 122-195 (QRKKMRLANE…QKRHGISSQR (74 aa)). Residues 202–238 (SPVAGPAPVKEEPAQSPGAVLVPDGAPATLPHSEGGY) are disordered. The DDE-1 domain occupies 240–365 (DEQIYNANVT…CLQQKAVLLV (126 aa)). 2 disordered regions span residues 375 to 400 (TSMPPLEESEETPRQCQPELLGSPEE) and 548 to 581 (GCREEVAPAAPPSPASLPSSIGAGEEEEEATEQG).

The protein belongs to the tigger transposable element derived protein family.

The protein localises to the nucleus. The sequence is that of Tigger transposable element derived 5 (Tigd5) from Mus musculus (Mouse).